Reading from the N-terminus, the 169-residue chain is Oleosin Cor a 15 (169 aa).

Helical transmembrane passes span 38–58 (IAVV…GLTF) and 70–90 (PLFV…GLAV). A Proline-knot motif is present at residues 70 to 81 (PLFVLCSPVLVP). Composition is skewed to basic and acidic residues over residues 122-131 (QMEHAKRRAQ) and 160-169 (EGGRGEEKKT). The disordered stretch occupies residues 122 to 169 (QMEHAKRRAQDTAGHLGQKARETGQTVTGKGQEAGKTLEGGRGEEKKT).

This sequence belongs to the oleosin family. As to expression, expressed in seeds (at protein level).

The protein localises to the lipid droplet. It localises to the membrane. May have a structural role to stabilize the lipid body during desiccation of the seed by preventing coalescence of the oil. Probably interacts with both lipid and phospholipid moieties of lipid bodies. May also provide recognition signals for specific lipase anchorage in lipolysis during seedling growth. The chain is Oleosin Cor a 15 from Corylus avellana (European hazel).